The following is a 433-amino-acid chain: Cell adhesion molecule 2 (433 aa).

The first 24 residues, 1–24 (MILQPSALLCLSSLWGVIVQASQG), serve as a signal peptide directing secretion. Residues 25–365 (QFPVTQNVTV…ALPGPVATDH (341 aa)) are Extracellular-facing. The region spanning 27-114 (PVTQNVTVVE…SLFTMPVKTS (88 aa)) is the Ig-like V-type domain. 3 N-linked (GlcNAc...) asparagine glycosylation sites follow: N31, N41, and N51. 3 disulfides stabilise this stretch: C44–C104, C146–C203, and C248–C296. Ig-like C2-type domains lie at 127 to 217 (PHIS…PQIA) and 227 to 312 (PTVR…YVLI). N-linked (GlcNAc...) asparagine glycosylation is found at N287 and N291. A helical transmembrane segment spans residues 366-386 (ALIGGVVAVVVFVTLCSIILI). Over 387–433 (GRYLARHKGTYLTNEAKGAEDAPDADTAIINAEGSQVNAEEKKEYFI) the chain is Cytoplasmic.

This sequence belongs to the nectin family.

The protein resides in the membrane. This is Cell adhesion molecule 2 (cadm2) from Xenopus tropicalis (Western clawed frog).